Reading from the N-terminus, the 343-residue chain is Dihydroorotate dehydrogenase (quinone) (343 aa).

Residues 61 to 65 and threonine 85 each bind FMN; that span reads AGLDK. Lysine 65 serves as a coordination point for substrate. 110 to 114 is a binding site for substrate; it reads NRMGF. 2 residues coordinate FMN: asparagine 138 and asparagine 171. Substrate is bound at residue asparagine 171. Catalysis depends on serine 174, which acts as the Nucleophile. Asparagine 176 is a substrate binding site. Lysine 216 and threonine 244 together coordinate FMN. 245 to 246 is a binding site for substrate; the sequence is NT. FMN is bound by residues glycine 267, glycine 296, and 317 to 318; that span reads YS.

It belongs to the dihydroorotate dehydrogenase family. Type 2 subfamily. Monomer. FMN is required as a cofactor.

It localises to the cell membrane. It catalyses the reaction (S)-dihydroorotate + a quinone = orotate + a quinol. The protein operates within pyrimidine metabolism; UMP biosynthesis via de novo pathway; orotate from (S)-dihydroorotate (quinone route): step 1/1. Its function is as follows. Catalyzes the conversion of dihydroorotate to orotate with quinone as electron acceptor. The protein is Dihydroorotate dehydrogenase (quinone) of Stutzerimonas stutzeri (strain A1501) (Pseudomonas stutzeri).